The chain runs to 88 residues: Small ribosomal subunit protein bS20 (88 aa).

The protein belongs to the bacterial ribosomal protein bS20 family.

Binds directly to 16S ribosomal RNA. The protein is Small ribosomal subunit protein bS20 of Methylocella silvestris (strain DSM 15510 / CIP 108128 / LMG 27833 / NCIMB 13906 / BL2).